Consider the following 162-residue polypeptide: Probable chemoreceptor glutamine deamidase CheD 2 (162 aa).

It belongs to the CheD family.

The catalysed reaction is L-glutaminyl-[protein] + H2O = L-glutamyl-[protein] + NH4(+). Its function is as follows. Probably deamidates glutamine residues to glutamate on methyl-accepting chemotaxis receptors (MCPs), playing an important role in chemotaxis. In Geobacter metallireducens (strain ATCC 53774 / DSM 7210 / GS-15), this protein is Probable chemoreceptor glutamine deamidase CheD 2.